The chain runs to 188 residues: NEDD8-conjugating enzyme UBC12 (188 aa).

Met1 bears the N-acetylmethionine mark. Residues Met1–Gln12 show a composition bias toward basic residues. The disordered stretch occupies residues Met1–Pro23. A UBC core domain is found at Ala27–Ile177. Cys115 acts as the Glycyl thioester intermediate in catalysis.

This sequence belongs to the ubiquitin-conjugating enzyme family. UBC12 subfamily. As to quaternary structure, interacts with DCN1. In terms of processing, the acetylation of Met-1 is cotranslational, and not regulatory. The N-acetylmethionine increases affinity for DCUN1D1 by about 2 orders of magnitude and is crucial for NEDD8 transfer to cullins.

The catalysed reaction is [E1 NEDD8-activating enzyme]-S-[NEDD8 protein]-yl-L-cysteine + [E2 NEDD8-conjugating enzyme]-L-cysteine = [E1 NEDD8-activating enzyme]-L-cysteine + [E2 NEDD8-conjugating enzyme]-S-[NEDD8-protein]-yl-L-cysteine.. The protein operates within protein modification; protein neddylation. Accepts the ubiquitin-like protein NEDD8/RUB1 from the UBA3-ULA1 E1 complex and catalyzes its covalent attachment to other proteins. The major substrate is CDC53/Cullin. In Saccharomyces cerevisiae (strain ATCC 204508 / S288c) (Baker's yeast), this protein is NEDD8-conjugating enzyme UBC12 (UBC12).